A 734-amino-acid chain; its full sequence is DNA ligase (734 aa).

NAD(+)-binding positions include 42 to 46 (DAEYD), 91 to 92 (SL), and Glu125. The N6-AMP-lysine intermediate role is filled by Lys127. NAD(+)-binding residues include Arg148, Glu185, Lys301, and Lys325. Residues Cys430, Cys433, Cys454, and Cys460 each contribute to the Zn(2+) site. The BRCT domain occupies 655–734 (SADSEVAGKT…DTWLQRVGKA (80 aa)).

It belongs to the NAD-dependent DNA ligase family. LigA subfamily. It depends on Mg(2+) as a cofactor. Requires Mn(2+) as cofactor.

The catalysed reaction is NAD(+) + (deoxyribonucleotide)n-3'-hydroxyl + 5'-phospho-(deoxyribonucleotide)m = (deoxyribonucleotide)n+m + AMP + beta-nicotinamide D-nucleotide.. Its function is as follows. DNA ligase that catalyzes the formation of phosphodiester linkages between 5'-phosphoryl and 3'-hydroxyl groups in double-stranded DNA using NAD as a coenzyme and as the energy source for the reaction. It is essential for DNA replication and repair of damaged DNA. The chain is DNA ligase from Mesorhizobium japonicum (strain LMG 29417 / CECT 9101 / MAFF 303099) (Mesorhizobium loti (strain MAFF 303099)).